The chain runs to 207 residues: ATP synthase subunit b 2 (207 aa).

A helical transmembrane segment spans residues 58 to 78; it reads LLWLVITFGVFYLLMQKVIAP.

Belongs to the ATPase B chain family. As to quaternary structure, F-type ATPases have 2 components, F(1) - the catalytic core - and F(0) - the membrane proton channel. F(1) has five subunits: alpha(3), beta(3), gamma(1), delta(1), epsilon(1). F(0) has three main subunits: a(1), b(2) and c(10-14). The alpha and beta chains form an alternating ring which encloses part of the gamma chain. F(1) is attached to F(0) by a central stalk formed by the gamma and epsilon chains, while a peripheral stalk is formed by the delta and b chains.

The protein localises to the cell inner membrane. In terms of biological role, f(1)F(0) ATP synthase produces ATP from ADP in the presence of a proton or sodium gradient. F-type ATPases consist of two structural domains, F(1) containing the extramembraneous catalytic core and F(0) containing the membrane proton channel, linked together by a central stalk and a peripheral stalk. During catalysis, ATP synthesis in the catalytic domain of F(1) is coupled via a rotary mechanism of the central stalk subunits to proton translocation. Its function is as follows. Component of the F(0) channel, it forms part of the peripheral stalk, linking F(1) to F(0). The b'-subunit is a diverged and duplicated form of b found in plants and photosynthetic bacteria. This chain is ATP synthase subunit b 2 (atpF2), found in Rhizobium johnstonii (strain DSM 114642 / LMG 32736 / 3841) (Rhizobium leguminosarum bv. viciae).